Here is a 243-residue protein sequence, read N- to C-terminus: tRNA (guanine-N(1)-)-methyltransferase (243 aa).

Residues Gly108 and 127-132 (LGDFVL) contribute to the S-adenosyl-L-methionine site.

This sequence belongs to the RNA methyltransferase TrmD family. As to quaternary structure, homodimer.

Its subcellular location is the cytoplasm. It carries out the reaction guanosine(37) in tRNA + S-adenosyl-L-methionine = N(1)-methylguanosine(37) in tRNA + S-adenosyl-L-homocysteine + H(+). Its function is as follows. Specifically methylates guanosine-37 in various tRNAs. This is tRNA (guanine-N(1)-)-methyltransferase from Streptococcus equi subsp. equi (strain 4047).